A 283-amino-acid chain; its full sequence is ATP phosphoribosyltransferase (283 aa).

Belongs to the ATP phosphoribosyltransferase family. Long subfamily. Mg(2+) serves as cofactor.

It is found in the cytoplasm. The enzyme catalyses 1-(5-phospho-beta-D-ribosyl)-ATP + diphosphate = 5-phospho-alpha-D-ribose 1-diphosphate + ATP. It participates in amino-acid biosynthesis; L-histidine biosynthesis; L-histidine from 5-phospho-alpha-D-ribose 1-diphosphate: step 1/9. Feedback inhibited by histidine. Functionally, catalyzes the condensation of ATP and 5-phosphoribose 1-diphosphate to form N'-(5'-phosphoribosyl)-ATP (PR-ATP). Has a crucial role in the pathway because the rate of histidine biosynthesis seems to be controlled primarily by regulation of HisG enzymatic activity. The protein is ATP phosphoribosyltransferase of Bacteroides thetaiotaomicron (strain ATCC 29148 / DSM 2079 / JCM 5827 / CCUG 10774 / NCTC 10582 / VPI-5482 / E50).